We begin with the raw amino-acid sequence, 81 residues long: RNA-binding protein Hfq (81 aa).

The Sm domain maps to aspartate 11 to isoleucine 71.

The protein belongs to the Hfq family. In terms of assembly, homohexamer.

Its function is as follows. RNA chaperone that binds small regulatory RNA (sRNAs) and mRNAs to facilitate mRNA translational regulation in response to envelope stress, environmental stress and changes in metabolite concentrations. Also binds with high specificity to tRNAs. The chain is RNA-binding protein Hfq from Clostridium beijerinckii (strain ATCC 51743 / NCIMB 8052) (Clostridium acetobutylicum).